Here is a 919-residue protein sequence, read N- to C-terminus: Tight junction protein ZO-3 (919 aa).

Residues 11–93 (TATLSKDPRR…MANITVKRPR (83 aa)) enclose the PDZ 1 domain. Positions 92–173 (PRRIHLPATK…SPGGGSEANG (82 aa)) are disordered. S112 is subject to Phosphoserine. Over residues 117-131 (GPQRVEEVDQGRGYD) the composition is skewed to basic and acidic residues. S136 is subject to Phosphoserine. A compositionally biased stretch (basic residues) spans 147–163 (RRPRPGRRGRAGSHGRR). A phosphoserine mark is found at S164, S169, S203, and S319. In terms of domain architecture, PDZ 2 spans 195-272 (SVLVKRRDSE…KLSLLVLRDR (78 aa)). Positions 279–377 (IPPAVSDSDS…SSQSMEDRGY (99 aa)) are disordered. T325 bears the Phosphothreonine mark. S327 carries the phosphoserine modification. Over residues 332–360 (PRLRRESSVDSRTISEPDEQRSELPRESS) the composition is skewed to basic and acidic residues. The residue at position 371 (S371) is a Phosphoserine. Residues 380–446 (DTRVVRFLKG…LTREEAVQFL (67 aa)) form the PDZ 3 domain. One can recognise an SH3 domain in the interval 475-549 (GDSFYIRTHF…PNQSRAEQLA (75 aa)). The Guanylate kinase-like domain maps to 580-761 (LRRGAKKTTQ…WYQELKAIIR (182 aa)). The residue at position 591 (S591) is a Phosphoserine. Residues 791-801 (ADSSADLSCDS) are compositionally biased toward low complexity. 2 disordered regions span residues 791–886 (ADSS…DSMR) and 899–919 (RVHD…ATDL). The span at 812–828 (EGGAYTDGEGYTDGEGG) shows a compositional bias: gly residues. S856, S905, and S906 each carry phosphoserine.

The protein belongs to the MAGUK family. As to quaternary structure, interacts with occludin OCLN, claudins and TPJ1. Interacts with PATJ. Interacts with UBN1. Interacts with FASLG. Interacts with CCND1. In terms of processing, phosphorylated.

The protein resides in the cell membrane. The protein localises to the cell junction. It is found in the tight junction. Its subcellular location is the nucleus. In terms of biological role, TJP1, TJP2, and TJP3 are closely related scaffolding proteins that link tight junction (TJ) transmembrane proteins such as claudins, junctional adhesion molecules, and occludin to the actin cytoskeleton. The tight junction acts to limit movement of substances through the paracellular space and as a boundary between the compositionally distinct apical and basolateral plasma membrane domains of epithelial and endothelial cells. Binds and recruits PATJ to tight junctions where it connects and stabilizes apical and lateral components of tight junctions. Promotes cell-cycle progression through the sequestration of cyclin D1 (CCND1) at tight junctions during mitosis which prevents CCND1 degradation during M-phase and enables S-phase transition. With TJP1 and TJP2, participates in the junctional retention and stability of the transcription factor DBPA, but is not involved in its shuttling to the nucleus. Contrary to TJP2, TJP3 is dispensable for individual viability, embryonic development, epithelial differentiation, and the establishment of TJs, at least in the laboratory environment. The sequence is that of Tight junction protein ZO-3 (TJP3) from Homo sapiens (Human).